A 586-amino-acid chain; its full sequence is Tetratricopeptide repeat protein 39B (586 aa).

3 TPR repeats span residues 292–325 (SIIL…QQEW), 483–516 (CLVQ…EKRV), and 524–557 (PFTF…YKDY).

It belongs to the TTC39 family.

In terms of biological role, may be involved in lipid metabolism. This Xenopus laevis (African clawed frog) protein is Tetratricopeptide repeat protein 39B (ttc39b).